The sequence spans 268 residues: MPLAKRIIPCLDVDEGRVVKGINFVDIRDAGDPVEQARTYDAAGADELVFLDITATHEDRDIMHDVVRRTADQVFIPLTVGGGLRSVDDMRAMLQAGADKVAINSAAVKDPDLIARGADAFGDQCIVVAIDAKRRDGDGPAWEVVVHGGRKPTGRDAVEWAAEAEARGAGEILLTSMDRDGTKDGYDLALLRAVTERTQIPVIASGGAGTLEHLREGLVDGGASAVLAASIFHFREHTVEEAKDHLRDAGLPVRPALNNWTDRYAPTD.

Catalysis depends on residues D12 and D131.

Belongs to the HisA/HisF family. As to quaternary structure, heterodimer of HisH and HisF.

It is found in the cytoplasm. It catalyses the reaction 5-[(5-phospho-1-deoxy-D-ribulos-1-ylimino)methylamino]-1-(5-phospho-beta-D-ribosyl)imidazole-4-carboxamide + L-glutamine = D-erythro-1-(imidazol-4-yl)glycerol 3-phosphate + 5-amino-1-(5-phospho-beta-D-ribosyl)imidazole-4-carboxamide + L-glutamate + H(+). It participates in amino-acid biosynthesis; L-histidine biosynthesis; L-histidine from 5-phospho-alpha-D-ribose 1-diphosphate: step 5/9. Functionally, IGPS catalyzes the conversion of PRFAR and glutamine to IGP, AICAR and glutamate. The HisF subunit catalyzes the cyclization activity that produces IGP and AICAR from PRFAR using the ammonia provided by the HisH subunit. The sequence is that of Imidazole glycerol phosphate synthase subunit HisF from Salinibacter ruber (strain DSM 13855 / M31).